Here is a 467-residue protein sequence, read N- to C-terminus: Pentatricopeptide repeat-containing protein At1g77170, mitochondrial (467 aa).

A mitochondrion-targeting transit peptide spans 1–30 (MFFSGLISKLHVHGTKRTNHFTIFHRLNHF). PPR repeat units lie at residues 81–115 (IAFLWNNIMRSYIRHESPLDAIQVYLGMVRSTVLP), 116–150 (DRYSLPIVIKAAVQIHDFTLGKELHSVAVRLGFVG), 151–181 (DEFCESGFITLYCKAGEFENARKVFDENPER), 182–216 (KLGSWNAIIGGLNHAGRANEAVEMFVDMKRSGLEP), 217–251 (DDFTMVSVTASCGGLGDLSLAFQLHKCVLQAKTEE), 254–284 (DIMMLNSLIDMYGKCGRMDLASHIFEEMRQR), 285–319 (NVVSWSSMIVGYAANGNTLEALECFRQMREFGVRP), 320–350 (NKITFVGVLSACVHGGLVEEGKTYFAMMKSE), and 356–386 (GLSHYGCIVDLLSRDGQLKEAKKVVEEMPMK). The type E motif stretch occupies residues 391–466 (VWGCLMGGCE…IPAYSYASTT (76 aa)).

The protein belongs to the PPR family. PCMP-E subfamily.

The protein localises to the mitochondrion. The sequence is that of Pentatricopeptide repeat-containing protein At1g77170, mitochondrial (PCMP-E21) from Arabidopsis thaliana (Mouse-ear cress).